Here is a 156-residue protein sequence, read N- to C-terminus: Cyanate hydratase (156 aa).

Catalysis depends on residues R96, E99, and S122.

It belongs to the cyanase family.

It carries out the reaction cyanate + hydrogencarbonate + 3 H(+) = NH4(+) + 2 CO2. Catalyzes the reaction of cyanate with bicarbonate to produce ammonia and carbon dioxide. In Serratia proteamaculans (strain 568), this protein is Cyanate hydratase.